The sequence spans 136 residues: MTALMNHIYIDNPLISNSTNNVTHELLIDLHELYNDGEISRIVLLRTLVTQSADDATWIINLTDDVLNGLPLLKKRDRYTTQCHSTNMASTYDCDTGANAVGARGGATLAADYRGDWGGGVMLYKPLVVKACLTEI.

The protein resides in the cytoplasm. The protein localises to the nucleus. This is an uncharacterized protein from Schizosaccharomyces pombe (strain 972 / ATCC 24843) (Fission yeast).